The primary structure comprises 223 residues: uncharacterized protein (223 aa).

Positions 5–116 (RILIVEDDVM…ELLLRMRNML (112 aa)) constitute a Response regulatory domain. 4-aspartylphosphate is present on aspartate 52. Positions 121–219 (GTFTQIKHLY…IYGEGYRLNT (99 aa)) form a DNA-binding region, ompR/PhoB-type.

Phosphorylated by YbdK.

The protein resides in the cytoplasm. Functionally, member of the two-component regulatory system YbdK/YbdJ. This is an uncharacterized protein from Bacillus subtilis (strain 168).